We begin with the raw amino-acid sequence, 519 residues long: Glycogen synthase (519 aa).

The segment at 1–40 (MISAAVEPHVDAFKPDNREPLTPDFATTGKAPGAQRQHNP) is disordered. Positions 8–21 (PHVDAFKPDNREPL) are enriched in basic and acidic residues. Lysine 57 is an ADP-alpha-D-glucose binding site.

This sequence belongs to the glycosyltransferase 1 family. Bacterial/plant glycogen synthase subfamily.

The catalysed reaction is [(1-&gt;4)-alpha-D-glucosyl](n) + ADP-alpha-D-glucose = [(1-&gt;4)-alpha-D-glucosyl](n+1) + ADP + H(+). It functions in the pathway glycan biosynthesis; glycogen biosynthesis. Functionally, synthesizes alpha-1,4-glucan chains using ADP-glucose. In Pseudomonas putida (strain ATCC 47054 / DSM 6125 / CFBP 8728 / NCIMB 11950 / KT2440), this protein is Glycogen synthase.